The primary structure comprises 67 residues: Large ribosomal subunit protein uL29 (67 aa).

The protein belongs to the universal ribosomal protein uL29 family.

The chain is Large ribosomal subunit protein uL29 from Exiguobacterium sibiricum (strain DSM 17290 / CCUG 55495 / CIP 109462 / JCM 13490 / 255-15).